The following is a 131-amino-acid chain: Profilin-6 (131 aa).

This sequence belongs to the profilin family. In terms of assembly, occurs in many kinds of cells as a complex with monomeric actin in a 1:1 ratio.

It localises to the cytoplasm. The protein resides in the cytoskeleton. In terms of biological role, binds to actin and affects the structure of the cytoskeleton. At high concentrations, profilin prevents the polymerization of actin, whereas it enhances it at low concentrations. By binding to PIP2, it inhibits the formation of IP3 and DG. The sequence is that of Profilin-6 from Hevea brasiliensis (Para rubber tree).